We begin with the raw amino-acid sequence, 1068 residues long: Ubiquitin-protein ligase E3B (1068 aa).

M1 is subject to N-acetylmethionine. An IQ domain is found at 29-58; it reads RERAAVVIQAHVRSFLCRSRLQRDIRREID. At S419 the chain carries Phosphoserine. Residues 702 to 1068 enclose the HECT domain; sequence SQHAMKGVIR…ISMNTGFELS (367 aa). Residue C1036 is the Glycyl thioester intermediate of the active site.

Widely expressed.

The protein resides in the postsynaptic density. It carries out the reaction S-ubiquitinyl-[E2 ubiquitin-conjugating enzyme]-L-cysteine + [acceptor protein]-L-lysine = [E2 ubiquitin-conjugating enzyme]-L-cysteine + N(6)-ubiquitinyl-[acceptor protein]-L-lysine.. Its pathway is protein modification; protein ubiquitination. Functionally, E3 ubiquitin-protein ligase which accepts ubiquitin from an E2 ubiquitin-conjugating enzyme in the form of a thioester and then directly transfers the ubiquitin to targeted substrates. Ubiquitinates BCKDK and targets it for degradation, thereby regulating various metabolic processes. Involved in the positive regulation of neurite branching in hippocampal neurons and the control of neuronal spine number and morphology, through the ubiquitination of PPP3CC. This is Ubiquitin-protein ligase E3B (UBE3B) from Homo sapiens (Human).